The sequence spans 530 residues: Autoinducer-2 kinase (530 aa).

The protein belongs to the FGGY kinase family.

Its subcellular location is the cytoplasm. The enzyme catalyses (S)-4,5-dihydroxypentane-2,3-dione + ATP = (2S)-2-hydroxy-3,4-dioxopentyl phosphate + ADP + H(+). Functionally, catalyzes the phosphorylation of autoinducer-2 (AI-2) to phospho-AI-2, which subsequently inactivates the transcriptional regulator LsrR and leads to the transcription of the lsr operon. Phosphorylates the ring-open form of (S)-4,5-dihydroxypentane-2,3-dione (DPD), which is the precursor to all AI-2 signaling molecules, at the C5 position. This is Autoinducer-2 kinase from Escherichia coli (strain K12 / DH10B).